Here is a 363-residue protein sequence, read N- to C-terminus: Peptide chain release factor 1 (363 aa).

Residue Q236 is modified to N5-methylglutamine. The interval 286-305 (KKEMERSTMRKSQIGSGDRS) is disordered.

Belongs to the prokaryotic/mitochondrial release factor family. Methylated by PrmC. Methylation increases the termination efficiency of RF1.

The protein resides in the cytoplasm. Functionally, peptide chain release factor 1 directs the termination of translation in response to the peptide chain termination codons UAG and UAA. This Wolbachia pipientis subsp. Culex pipiens (strain wPip) protein is Peptide chain release factor 1.